The sequence spans 194 residues: Xanthine phosphoribosyltransferase (194 aa).

2 residues coordinate xanthine: leucine 20 and asparagine 27. Residue 128–132 (ANGQA) coordinates 5-phospho-alpha-D-ribose 1-diphosphate. Lysine 156 serves as a coordination point for xanthine.

This sequence belongs to the purine/pyrimidine phosphoribosyltransferase family. Xpt subfamily. Homodimer.

Its subcellular location is the cytoplasm. It carries out the reaction XMP + diphosphate = xanthine + 5-phospho-alpha-D-ribose 1-diphosphate. It functions in the pathway purine metabolism; XMP biosynthesis via salvage pathway; XMP from xanthine: step 1/1. Functionally, converts the preformed base xanthine, a product of nucleic acid breakdown, to xanthosine 5'-monophosphate (XMP), so it can be reused for RNA or DNA synthesis. This is Xanthine phosphoribosyltransferase from Geobacillus thermodenitrificans (strain NG80-2).